Consider the following 202-residue polypeptide: uncharacterized protein (202 aa).

The N-terminal stretch at 1-19 (MRRKNGFSVASVFILCSIA) is a signal peptide. The chain crosses the membrane as a helical span at residues 177–199 (FLASSSSSFSSFLPSIAIILFFV).

Its subcellular location is the membrane. This is an uncharacterized protein from Caenorhabditis elegans.